The primary structure comprises 66 residues: Alpha-actitoxin-Ms11a-1 (66 aa).

Residues 1–24 (MASKIFFVLAVFLVMSAVLPESFA) form the signal peptide. Cystine bridges form between Cys26-Cys41, Cys33-Cys46, and Cys40-Cys61.

The protein localises to the secreted. Its subcellular location is the nematocyst. Alpha-toxins act on postsynaptic membranes, they bind to the nicotinic acetylcholine receptors (nAChR) and thus inhibit them. This toxin competes with alpha-bungarotoxin for binding to orthosteric sites on muscle-type T.carlifornicus (IC(50)=408 nM) and human alpha-7/CHRNA7 nAChRs (IC(50)=14.16 uM). This chain is Alpha-actitoxin-Ms11a-1, found in Metridium senile (Brown sea anemone).